The following is a 513-amino-acid chain: ATP synthase subunit alpha (513 aa).

Position 169 to 176 (Gly169 to Thr176) interacts with ATP.

It belongs to the ATPase alpha/beta chains family. In terms of assembly, F-type ATPases have 2 components, CF(1) - the catalytic core - and CF(0) - the membrane proton channel. CF(1) has five subunits: alpha(3), beta(3), gamma(1), delta(1), epsilon(1). CF(0) has three main subunits: a(1), b(2) and c(9-12). The alpha and beta chains form an alternating ring which encloses part of the gamma chain. CF(1) is attached to CF(0) by a central stalk formed by the gamma and epsilon chains, while a peripheral stalk is formed by the delta and b chains.

Its subcellular location is the cell inner membrane. It carries out the reaction ATP + H2O + 4 H(+)(in) = ADP + phosphate + 5 H(+)(out). Functionally, produces ATP from ADP in the presence of a proton gradient across the membrane. The alpha chain is a regulatory subunit. In Edwardsiella ictaluri (strain 93-146), this protein is ATP synthase subunit alpha.